The chain runs to 243 residues: Large ribosomal subunit protein uL3 (243 aa).

2 disordered regions span residues 139–164 and 218–243; these read VSHR…KMPG and KPGK…GEGA. Position 151 is an N5-methylglutamine (Gln-151). Positions 218 to 229 are enriched in basic and acidic residues; that stretch reads KPGKFKLADGGD. The span at 230-243 shows a compositional bias: low complexity; the sequence is KAAAAPEATAGEGA.

It belongs to the universal ribosomal protein uL3 family. In terms of assembly, part of the 50S ribosomal subunit. Forms a cluster with proteins L14 and L19. Post-translationally, methylated by PrmB.

Its function is as follows. One of the primary rRNA binding proteins, it binds directly near the 3'-end of the 23S rRNA, where it nucleates assembly of the 50S subunit. In Afipia carboxidovorans (strain ATCC 49405 / DSM 1227 / KCTC 32145 / OM5) (Oligotropha carboxidovorans), this protein is Large ribosomal subunit protein uL3.